The primary structure comprises 415 residues: Serine hydroxymethyltransferase (415 aa).

(6S)-5,6,7,8-tetrahydrofolate is bound by residues L121 and 125-127 (GHL). Position 229 is an N6-(pyridoxal phosphate)lysine (K229).

This sequence belongs to the SHMT family. In terms of assembly, homodimer. Pyridoxal 5'-phosphate serves as cofactor.

The protein localises to the cytoplasm. The catalysed reaction is (6R)-5,10-methylene-5,6,7,8-tetrahydrofolate + glycine + H2O = (6S)-5,6,7,8-tetrahydrofolate + L-serine. The protein operates within one-carbon metabolism; tetrahydrofolate interconversion. It participates in amino-acid biosynthesis; glycine biosynthesis; glycine from L-serine: step 1/1. Its function is as follows. Catalyzes the reversible interconversion of serine and glycine with tetrahydrofolate (THF) serving as the one-carbon carrier. This reaction serves as the major source of one-carbon groups required for the biosynthesis of purines, thymidylate, methionine, and other important biomolecules. Also exhibits THF-independent aldolase activity toward beta-hydroxyamino acids, producing glycine and aldehydes, via a retro-aldol mechanism. This Bordetella petrii (strain ATCC BAA-461 / DSM 12804 / CCUG 43448) protein is Serine hydroxymethyltransferase.